Consider the following 310-residue polypeptide: Aspartate carbamoyltransferase catalytic subunit (310 aa).

Arg59 and Thr60 together coordinate carbamoyl phosphate. Position 87 (Lys87) interacts with L-aspartate. Residues Arg109, His137, and Gln140 each coordinate carbamoyl phosphate. Residues Arg170 and Arg225 each coordinate L-aspartate. Residues Gly266 and Pro267 each contribute to the carbamoyl phosphate site.

This sequence belongs to the aspartate/ornithine carbamoyltransferase superfamily. ATCase family. In terms of assembly, heterododecamer (2C3:3R2) of six catalytic PyrB chains organized as two trimers (C3), and six regulatory PyrI chains organized as three dimers (R2).

The catalysed reaction is carbamoyl phosphate + L-aspartate = N-carbamoyl-L-aspartate + phosphate + H(+). It participates in pyrimidine metabolism; UMP biosynthesis via de novo pathway; (S)-dihydroorotate from bicarbonate: step 2/3. Functionally, catalyzes the condensation of carbamoyl phosphate and aspartate to form carbamoyl aspartate and inorganic phosphate, the committed step in the de novo pyrimidine nucleotide biosynthesis pathway. This Pelobacter propionicus (strain DSM 2379 / NBRC 103807 / OttBd1) protein is Aspartate carbamoyltransferase catalytic subunit.